Reading from the N-terminus, the 639-residue chain is DNA gyrase subunit B (639 aa).

Residues 392–402 show a composition bias toward basic and acidic residues; sequence QAEELTRRKSA. Residues 392–416 form a disordered region; the sequence is QAEELTRRKSALESTSLPGKLADCQ. In terms of domain architecture, Toprim spans 423–537; the sequence is SELFIVEGDS…AGYVYAAQPP (115 aa). Mg(2+) is bound by residues Glu-429, Asp-502, and Asp-504. Lys-624 is covalently cross-linked (Glycyl lysine isopeptide (Lys-Gly) (interchain with G-Cter in SAMP2)).

It belongs to the type II topoisomerase GyrB family. In terms of assembly, heterotetramer, composed of two GyrA and two GyrB chains. In the heterotetramer, GyrA contains the active site tyrosine that forms a transient covalent intermediate with DNA, while GyrB binds cofactors and catalyzes ATP hydrolysis. It depends on Mg(2+) as a cofactor. Mn(2+) serves as cofactor. The cofactor is Ca(2+).

The protein localises to the cytoplasm. The enzyme catalyses ATP-dependent breakage, passage and rejoining of double-stranded DNA.. Functionally, a type II topoisomerase that negatively supercoils closed circular double-stranded (ds) DNA in an ATP-dependent manner to modulate DNA topology and maintain chromosomes in an underwound state. Negative supercoiling favors strand separation, and DNA replication, transcription, recombination and repair, all of which involve strand separation. Also able to catalyze the interconversion of other topological isomers of dsDNA rings, including catenanes and knotted rings. Type II topoisomerases break and join 2 DNA strands simultaneously in an ATP-dependent manner. The chain is DNA gyrase subunit B from Haloferax volcanii (strain ATCC 29605 / DSM 3757 / JCM 8879 / NBRC 14742 / NCIMB 2012 / VKM B-1768 / DS2) (Halobacterium volcanii).